The following is a 117-amino-acid chain: MQNIPPQVQAMLGQLDTYQQQLQLVIQQKQKVQADLNEAKKALEEIETLPDDAQIYKTVGTLIVKTTKEKAVQELKEKIETLEVRLNALNRQEQKINEKVKELTQKIQAALRPPTAG.

This sequence belongs to the prefoldin subunit beta family. Heterohexamer of two alpha and four beta subunits.

The protein resides in the cytoplasm. Functionally, molecular chaperone capable of stabilizing a range of proteins. Seems to fulfill an ATP-independent, HSP70-like function in archaeal de novo protein folding. This chain is Prefoldin subunit beta (pfdB), found in Pyrococcus horikoshii (strain ATCC 700860 / DSM 12428 / JCM 9974 / NBRC 100139 / OT-3).